The primary structure comprises 613 residues: pH-response transcription factor pacC/RIM101 (613 aa).

A disordered region spans residues 1-61 (MSPSAPEQKP…SSTAPSTSSD (61 aa)). The span at 11–60 (QLQQQQQQQQQGSSSGDSSSGSVNDSKSVTPAPSATSSTSQSSTAPSTSS) shows a compositional bias: low complexity. 3 C2H2-type zinc fingers span residues 64–89 (LICR…CERH), 100–124 (LTCQ…IRVH), and 130–152 (HKCE…VKTH). The segment covering 146-157 (KKHVKTHADDSV) has biased composition (basic and acidic residues). 4 disordered regions span residues 146 to 186 (KKHV…YDHT), 371 to 391 (NTPS…GADG), 406 to 535 (AISS…ATRE), and 565 to 613 (EFVE…MPGA). Over residues 417–441 (PPSSSMSYTSGHSPSPSSSAMSPQS) the composition is skewed to low complexity. Polar residues-rich tracts occupy residues 442–460 (RHGS…SLPA) and 506–517 (SGASTPKASESA). The YPX[LI] motif 1 motif lies at 451 to 454 (YPTL). The YPX[LI] motif 2 signature appears at 605-608 (YPIL).

The protein belongs to the pacC/RIM101 family. In terms of assembly, binds to DNA. Post-translationally, activated by C-terminal proteolytic cleavage by signaling protease (probably palB/RIM13) at neutral to alkaline ambient pH.

The protein localises to the cytoplasm. The protein resides in the nucleus. Its function is as follows. Transcription factor that mediates regulation of both acid- and alkaline-expressed genes in response to ambient pH. At alkaline ambient pH, activates transcription of alkaline-expressed genes (including PAC1 itself) and represses transcription of acid-expressed genes. This Gibberella moniliformis (Maize ear and stalk rot fungus) protein is pH-response transcription factor pacC/RIM101 (PAC1).